The following is a 540-amino-acid chain: NXPE family member 1 (540 aa).

Positions 1 to 22 (MLHKYLKLICLLAAICVLCIIS) are cleaved as a signal peptide. 6 N-linked (GlcNAc...) asparagine glycosylation sites follow: N24, N42, N87, N155, N205, and N291.

Belongs to the NXPE family. Intestine, and to a lesser extent in kidney.

It localises to the secreted. The chain is NXPE family member 1 (NXPE1) from Oryctolagus cuniculus (Rabbit).